A 150-amino-acid chain; its full sequence is Large ribosomal subunit protein bL9 (150 aa).

The protein belongs to the bacterial ribosomal protein bL9 family.

In terms of biological role, binds to the 23S rRNA. In Neisseria meningitidis serogroup A / serotype 4A (strain DSM 15465 / Z2491), this protein is Large ribosomal subunit protein bL9.